The chain runs to 143 residues: Transcriptional regulator MraZ (143 aa).

SpoVT-AbrB domains follow at residues 5 to 47 (THSP…PIRE) and 76 to 119 (ASNE…DAQT).

It belongs to the MraZ family. As to quaternary structure, forms oligomers.

Its subcellular location is the cytoplasm. It is found in the nucleoid. The sequence is that of Transcriptional regulator MraZ from Thermobifida fusca (strain YX).